The following is a 202-amino-acid chain: Small ribosomal subunit protein uS4c (202 aa).

The S4 RNA-binding domain occupies 90–154 (MRLDNILFRL…SQSIITKNLN (65 aa)).

It belongs to the universal ribosomal protein uS4 family. Part of the 30S ribosomal subunit. Contacts protein S5. The interaction surface between S4 and S5 is involved in control of translational fidelity.

The protein localises to the plastid. It is found in the chloroplast. One of the primary rRNA binding proteins, it binds directly to 16S rRNA where it nucleates assembly of the body of the 30S subunit. Functionally, with S5 and S12 plays an important role in translational accuracy. In Monoclea forsteri (Liverwort), this protein is Small ribosomal subunit protein uS4c (rps4).